Consider the following 691-residue polypeptide: Elongation factor G (691 aa).

The 275-residue stretch at 8 to 282 (EKTRNIGIMA…AVVDYLPSPV (275 aa)) folds into the tr-type G domain. GTP contacts are provided by residues 17 to 24 (AHIDAGKT), 81 to 85 (DTPGH), and 135 to 138 (NKMD).

This sequence belongs to the TRAFAC class translation factor GTPase superfamily. Classic translation factor GTPase family. EF-G/EF-2 subfamily.

It localises to the cytoplasm. Its function is as follows. Catalyzes the GTP-dependent ribosomal translocation step during translation elongation. During this step, the ribosome changes from the pre-translocational (PRE) to the post-translocational (POST) state as the newly formed A-site-bound peptidyl-tRNA and P-site-bound deacylated tRNA move to the P and E sites, respectively. Catalyzes the coordinated movement of the two tRNA molecules, the mRNA and conformational changes in the ribosome. The protein is Elongation factor G of Caldicellulosiruptor saccharolyticus (strain ATCC 43494 / DSM 8903 / Tp8T 6331).